The chain runs to 395 residues: Probable protein arginine N-methyltransferase 6.2 (395 aa).

The segment covering 1–11 (MFAGGADGGNG) has biased composition (gly residues). The disordered stretch occupies residues 1–37 (MFAGGADGGNGHLPRPRRARRGGGGGGGMGSPPLGPP). The 346-residue stretch at 45–390 (DMAYFKAYSH…YFTRDQWYVK (346 aa)) folds into the SAM-dependent MTase PRMT-type domain. The S-adenosyl-L-methionine site is built by H58, R67, G91, D113, and E142. Active-site residues include E156 and E165. Residues 300–324 (KKQANQCLDGNTQDASPSNKKKKAD) are disordered. The segment covering 302–317 (QANQCLDGNTQDASPS) has biased composition (polar residues).

Belongs to the class I-like SAM-binding methyltransferase superfamily. Protein arginine N-methyltransferase family. PRMT6 subfamily.

Arginine methyltransferase that can both catalyze the formation of omega-N monomethylarginine (MMA) and asymmetrical dimethylarginine (aDMA). The protein is Probable protein arginine N-methyltransferase 6.2 (PRMT6.2) of Oryza sativa subsp. indica (Rice).